A 738-amino-acid polypeptide reads, in one-letter code: Catalase-peroxidase (738 aa).

A compositionally biased stretch (basic and acidic residues) spans 1-16 (MSENHDAIVTDAKTEE). The tract at residues 1–37 (MSENHDAIVTDAKTEEAGGCPVAHGRAPHPTQGGGNR) is disordered. Residues 108-231 (WHSAGTYRIS…LGAVQMGLIY (124 aa)) constitute a cross-link (tryptophyl-tyrosyl-methioninium (Trp-Tyr) (with M-257)). The Proton acceptor role is filled by H109. The segment at residues 231–257 (YVNPEGPNGNPDPIAAARDIRETFGRM) is a cross-link (tryptophyl-tyrosyl-methioninium (Tyr-Met) (with W-108)). Residue H272 coordinates heme b.

The protein belongs to the peroxidase family. Peroxidase/catalase subfamily. In terms of assembly, homodimer or homotetramer. It depends on heme b as a cofactor. In terms of processing, formation of the three residue Trp-Tyr-Met cross-link is important for the catalase, but not the peroxidase activity of the enzyme.

The catalysed reaction is H2O2 + AH2 = A + 2 H2O. It carries out the reaction 2 H2O2 = O2 + 2 H2O. Functionally, bifunctional enzyme with both catalase and broad-spectrum peroxidase activity. In Streptomyces ambofaciens, this protein is Catalase-peroxidase.